Here is a 124-residue protein sequence, read N- to C-terminus: Small ribosomal subunit protein uS12 (124 aa).

The disordered stretch occupies residues Met-1–Gly-32. Asp-89 bears the 3-methylthioaspartic acid mark. The tract at residues Thr-104–Ser-124 is disordered. Basic residues predominate over residues Lys-108–Gly-118.

It belongs to the universal ribosomal protein uS12 family. Part of the 30S ribosomal subunit. Contacts proteins S8 and S17. May interact with IF1 in the 30S initiation complex.

Functionally, with S4 and S5 plays an important role in translational accuracy. In terms of biological role, interacts with and stabilizes bases of the 16S rRNA that are involved in tRNA selection in the A site and with the mRNA backbone. Located at the interface of the 30S and 50S subunits, it traverses the body of the 30S subunit contacting proteins on the other side and probably holding the rRNA structure together. The combined cluster of proteins S8, S12 and S17 appears to hold together the shoulder and platform of the 30S subunit. This chain is Small ribosomal subunit protein uS12, found in Rhodococcus jostii (strain RHA1).